The sequence spans 105 residues: Cysteine-rich venom protein VAR2 (105 aa).

Residues 1 to 22 (MILLKLYLTLAAILCQSRGTTS) form the signal peptide.

This sequence belongs to the CRISP family. Post-translationally, contains 8 disulfide bonds. Expressed by the venom gland.

The protein resides in the secreted. Blocks ryanodine receptors, and potassium channels. This is Cysteine-rich venom protein VAR2 from Varanus acanthurus (Ridge-tailed monitor).